Here is a 120-residue protein sequence, read N- to C-terminus: MAAAPKDIEKPHVGDSASVHRIRITLTSRNVRSLENVCRDLINGAKNQNLRVKGPVRMPTKTLRITTRKTPCGEGSKTWDRFQMRIHKRIIDLHSPSEIVKKITSINIEPGVEVEVTIAN.

2 positions are modified to phosphoserine: S16 and S18.

This sequence belongs to the universal ribosomal protein uS10 family. In terms of tissue distribution, expressed ubiquitously in embryos, highest expression is in the midgut.

The polypeptide is Small ribosomal subunit protein uS10 (RpS20) (Drosophila melanogaster (Fruit fly)).